Here is a 343-residue protein sequence, read N- to C-terminus: MPIATPEVYNEMLDRAKAGKFAYPAINVTSSQTLHAALRGFAEAESDGIVQISTGGAEFLGGQHNKDMVTGAVALAEFAHIVAEKYDVTVALHTDHCPKDKLDGYVRPLIAVSEERVKAGRNPLFQSHMWDGSAETLADNLSIAQELLARARAARIILEVEITPTGGEEDGVSHEINDSLYTTVDDAVRTVEALGLGEKGRYLLAASFGNVHGVYKPGNVVLRPELLKELNEGIASKYGQPAGSKPFDFVFHGGSGSTAEEIATALENGVVKMNIDTDTQYAFTRPVVDHMFRNYDGVLKVDGEVGNKKTYDPRTWGKLAEAGMAARVVEACGHLRSAGQKIK.

Serine 53 serves as a coordination point for D-glyceraldehyde 3-phosphate. The active-site Proton donor is aspartate 95. Zn(2+) is bound by residues histidine 96, aspartate 131, glutamate 161, and histidine 212. A dihydroxyacetone phosphate-binding site is contributed by glycine 213. A Zn(2+)-binding site is contributed by histidine 252. Dihydroxyacetone phosphate is bound by residues 253–255 (GGS) and 274–277 (NIDT).

Belongs to the class II fructose-bisphosphate aldolase family. The cofactor is Zn(2+).

It carries out the reaction beta-D-fructose 1,6-bisphosphate = D-glyceraldehyde 3-phosphate + dihydroxyacetone phosphate. The protein operates within carbohydrate degradation; glycolysis; D-glyceraldehyde 3-phosphate and glycerone phosphate from D-glucose: step 4/4. Its function is as follows. Catalyzes the aldol condensation of dihydroxyacetone phosphate (DHAP or glycerone-phosphate) with glyceraldehyde 3-phosphate (G3P) to form fructose 1,6-bisphosphate (FBP) in gluconeogenesis and the reverse reaction in glycolysis. This is Fructose-bisphosphate aldolase (fba) from Streptomyces coelicolor (strain ATCC BAA-471 / A3(2) / M145).